The primary structure comprises 1113 residues: uncharacterized protein (1113 aa).

313 to 320 (GPPGTGKS) provides a ligand contact to ATP.

The protein belongs to the DNA2/NAM7 helicase family.

This is an uncharacterized protein from Mycoplasma pneumoniae (strain ATCC 29342 / M129 / Subtype 1) (Mycoplasmoides pneumoniae).